A 143-amino-acid polypeptide reads, in one-letter code: MGAIVLVALMALVASSSAFSDIEHNIMKLEGENIISSSSTPNDDQSSFSDGTSDMVESLFLNSGNRNLVLMMLSGRPQPNGRCIGDAQPCGFLVSDKGCCDPNYCSQYSKGKCICVPKGQPCGLLHFCCLGLTCDGSFNGTCK.

Positions 1–18 are cleaved as a signal peptide; that stretch reads MGAIVLVALMALVASSSA. A propeptide spanning residues 19-80 is cleaved from the precursor; the sequence is FSDIEHNIMK…MMLSGRPQPN (62 aa). 6 cysteine pairs are disulfide-bonded: C83-C100, C90-C105, C99-C113, C115-C129, C122-C134, and C128-C142.

This sequence belongs to the urticatoxin-2 family. As to expression, expressed in trichomes, that are stiff epidermal hairs located on the surface of petioles and leaves.

Its subcellular location is the secreted. Its function is as follows. Plant defense neurotoxin that causes pain and systemic symptoms in mammals via modulation of voltage-gated sodium channels (Nav). Potent modulator of human Nav1.5/SCN5A (EC(50)=55 nM), Nav1.6/SCN8A (EC(50)=0.86 nM), and Nav1.7/SCN9A (EC(50)=208 nM), where it shifts the activation threshold to more negative potentials and delays fast inactivation. Also shifts the voltage-dependence of steady-state fast inactivation of Nav1.6/SCN8A, but not that of Nav1.5/SCN5A or Nav1.7/SCN9A. On Nav1.7/SCN9A, principally acts by binding to extracellular loops of domain IV (Nav site 3). In vivo, intraplantar injection into mice causes numerous dose-dependent, immediate, and long-lasting spontaneous pain behaviors, while no swelling is observed in the injected paw. At the highest doses tested, systemic symptoms including hypokinesia and hypersalivation are observed. This chain is Beta/delta-urticatoxin-Uf2b, found in Urtica ferox (Tree nettle).